The chain runs to 153 residues: Facilitator of iron transport 2 (153 aa).

A signal peptide spans 1–18; the sequence is MKFSTIFGATTVMTAVSA. A disordered region spans residues 73–98; the sequence is TEGPDTTSEKSTTKTLTLTNGSGSST. The span at 85 to 98 shows a compositional bias: low complexity; it reads TKTLTLTNGSGSST. An N-linked (GlcNAc...) asparagine glycan is attached at N92. G130 carries GPI-anchor amidated glycine lipidation. Residues 131 to 153 constitute a propeptide, removed in mature form; it reads AAPAAFQGASVGALALGLISYLL.

The GPI-anchor is attached to the protein in the endoplasmic reticulum and serves to target the protein to the cell surface. There, the glucosamine-inositol phospholipid moiety is cleaved off and the GPI-modified mannoprotein is covalently attached via its lipidless GPI glycan remnant to the 1,6-beta-glucan of the outer cell wall layer.

It is found in the secreted. It localises to the cell wall. The protein localises to the membrane. In terms of biological role, involved in the uptake of non-siderophore and siderophore sources of iron. Has a role in the retention of iron in the cell wall and periplasmic space. The sequence is that of Facilitator of iron transport 2 (FIT2) from Saccharomyces cerevisiae (strain ATCC 204508 / S288c) (Baker's yeast).